The primary structure comprises 21 residues: Ocellatin-2 (21 aa).

Ile-21 is modified (isoleucine amide).

In terms of tissue distribution, expressed by the skin dorsal glands.

It is found in the secreted. Has hemolytic activity against human erythrocytes and antibacterial activity against the Gram-negative bacterium E.coli. The sequence is that of Ocellatin-2 from Leptodactylus ocellatus (Argus frog).